The following is a 1273-amino-acid chain: DNA-directed RNA polymerase subunit beta (1273 aa).

It belongs to the RNA polymerase beta chain family. In terms of assembly, the RNAP catalytic core consists of 2 alpha, 1 beta, 1 beta' and 1 omega subunit. When a sigma factor is associated with the core the holoenzyme is formed, which can initiate transcription.

It catalyses the reaction RNA(n) + a ribonucleoside 5'-triphosphate = RNA(n+1) + diphosphate. Its function is as follows. DNA-dependent RNA polymerase catalyzes the transcription of DNA into RNA using the four ribonucleoside triphosphates as substrates. The protein is DNA-directed RNA polymerase subunit beta of Aster yellows witches'-broom phytoplasma (strain AYWB).